Reading from the N-terminus, the 123-residue chain is MYADDFDGEIEIDEVDSLVEFLSRRPAFDANNFVLTFEESGFPQLNIFAKNDIAVVYYMDIGENFVSKGNSASGGTEKFYENKLGGEVDLSKDCVVSKEQMIEAAKQFFATKQRPEQLTWSEL.

In terms of assembly, the toxic domain forms a 1:1 complex with the DddI immunity protein. This protein blocks the active site of the toxin.

In terms of biological role, immunity protein component of a toxin-immunity protein module, which functions as a cellular contact-dependent growth inhibition (CDI) system. CDI modules allow bacteria to communicate with and inhibit the growth of closely related neighboring bacteria in a contact-dependent fashion. Bacteria that have this module inhibit or kill bacteria without it, giving them a growth advantage. Specifically inhibits the toxic activity of cognate toxin DddA (C-terminal 163 residue fragment) upon expression in E.coli. This is Double-stranded DNA deaminase immunity protein from Burkholderia cenocepacia (strain H111).